A 97-amino-acid chain; its full sequence is Exodeoxyribonuclease 7 small subunit (97 aa).

A disordered region spans residues 1 to 22 (MAKTASPGDTAAGNGTEPLPDK).

This sequence belongs to the XseB family. In terms of assembly, heterooligomer composed of large and small subunits.

The protein resides in the cytoplasm. The catalysed reaction is Exonucleolytic cleavage in either 5'- to 3'- or 3'- to 5'-direction to yield nucleoside 5'-phosphates.. Its function is as follows. Bidirectionally degrades single-stranded DNA into large acid-insoluble oligonucleotides, which are then degraded further into small acid-soluble oligonucleotides. This Burkholderia vietnamiensis (strain G4 / LMG 22486) (Burkholderia cepacia (strain R1808)) protein is Exodeoxyribonuclease 7 small subunit.